The chain runs to 386 residues: Antilisterial bacteriocin subtilosin biosynthesis protein AlbE (386 aa).

In terms of biological role, involved in the production of the bacteriocin subtilosin. The chain is Antilisterial bacteriocin subtilosin biosynthesis protein AlbE (albE) from Bacillus subtilis (strain 168).